A 766-amino-acid polypeptide reads, in one-letter code: Protein STB6 (766 aa).

The disordered stretch occupies residues 447–469 (VPSEQLTTSNKEDSDTQPTKRNS). At serine 514 the chain carries Phosphoserine.

This sequence to yeast STB2.

Functionally, binds to SIN3. The sequence is that of Protein STB6 (STB6) from Saccharomyces cerevisiae (strain ATCC 204508 / S288c) (Baker's yeast).